The primary structure comprises 141 residues: uncharacterized protein (141 aa).

Transmembrane regions (helical) follow at residues 41–61 (LIML…NYLF) and 95–115 (IIFL…SGFF).

Its subcellular location is the cell membrane. This is an uncharacterized protein from Rickettsia prowazekii (strain Madrid E).